Reading from the N-terminus, the 215-residue chain is Sodium channel regulatory subunit beta-2 (215 aa).

The N-terminal stretch at 1–29 (MHRDAWLPRPAFSLTGLSLFFSLVPPGRS) is a signal peptide. Over 30-157 (MEVTAPTTLS…LEVPPERDST (128 aa)) the chain is Extracellular. The Ig-like C2-type domain maps to 32–154 (VTAPTTLSVL…QVLLEVPPER (123 aa)). Residues N42, N66, and N74 are each glycosylated (N-linked (GlcNAc...) asparagine). 2 disulfide bridges follow: C50-C127 and C72-C75. The chain crosses the membrane as a helical span at residues 158 to 179 (VAVIVGASVGGFLAVVILVLMV). Residues 180–215 (VKCVRRKKEQKLSTDDLKTEEEGKMDGEGNAEDGTK) lie on the Cytoplasmic side of the membrane. Residues 188 to 215 (EQKLSTDDLKTEEEGKMDGEGNAEDGTK) form a disordered region. The segment covering 189-215 (QKLSTDDLKTEEEGKMDGEGNAEDGTK) has biased composition (basic and acidic residues). Position 192 is a phosphoserine (S192).

It belongs to the sodium channel auxiliary subunit SCN2B (TC 8.A.17) family. In terms of assembly, a voltage-gated sodium (Nav) channel consists of an ion-conducting pore-forming alpha subunit functional on its own that is regulated by one or more beta subunits. The beta subunit SCN2B is disulfide-linked to the pore-forming alpha subunit. Interacts with SCN1A; regulatory subunit of SCN1A/Nav1.1. Interacts with SCN2A; regulatory subunit of SCN2A/Nav1.2. Interacts with SCN3A; regulatory subunit of SCN3A/Nav1.3. Interacts with SCN5A; regulatory subunit of SCN5A/Nav1.5. Interacts with SCN8A; regulatory subunit of SCN8A/Nav1.6. Interacts with SCN9A; regulatory subunit of SCN9A/Nav1.7. Interacts with SCN10A; regulatory subunit of SCN10A/Nav1.8. Interacts with TNR; may play a crucial role in clustering and regulation of activity of SCN2B-containing Nav channels at nodes of Ranvier.

It is found in the cell membrane. The protein localises to the cell projection. Its subcellular location is the axon. In terms of biological role, regulatory subunit of multiple voltage-gated sodium (Nav) channels directly mediating the depolarization of excitable membranes. Navs, also called VGSCs (voltage-gated sodium channels) or VDSCs (voltage-dependent sodium channels), operate by switching between closed and open conformations depending on the voltage difference across the membrane. In the open conformation they allow Na(+) ions to selectively pass through the pore, along their electrochemical gradient. The influx of Na+ ions provokes membrane depolarization, initiating the propagation of electrical signals throughout cells and tissues. The accessory beta subunits participate in localization and functional modulation of the Nav channels. Modulates the activity of SCN1A/Nav1.1, SCN2A/Nav1.2, SCN2A/Nav1.3, SCN5A/Nav1.5, SCN8A/Nav1.6, SCN9A/Nav1.7 and SCN10A/Nav1.8. The sequence is that of Sodium channel regulatory subunit beta-2 from Mus musculus (Mouse).